The sequence spans 156 residues: Ribosomal RNA large subunit methyltransferase H (156 aa).

Residues leucine 73, glycine 104, and 123–128 contribute to the S-adenosyl-L-methionine site; that span reads VSSLTL.

The protein belongs to the RNA methyltransferase RlmH family. As to quaternary structure, homodimer.

The protein localises to the cytoplasm. It carries out the reaction pseudouridine(1915) in 23S rRNA + S-adenosyl-L-methionine = N(3)-methylpseudouridine(1915) in 23S rRNA + S-adenosyl-L-homocysteine + H(+). Specifically methylates the pseudouridine at position 1915 (m3Psi1915) in 23S rRNA. The protein is Ribosomal RNA large subunit methyltransferase H of Burkholderia mallei (strain NCTC 10247).